The sequence spans 392 residues: Enoyl-[acyl-carrier-protein] reductase [NADH] (392 aa).

Residues 48 to 53 (GCSTGY), 74 to 75 (FE), 111 to 112 (DA), and 139 to 140 (LA) contribute to the NAD(+) site. Tyr-225 is a binding site for substrate. The Proton donor role is filled by Tyr-235. Residues Lys-244 and 273 to 275 (LVT) each bind NAD(+).

The protein belongs to the TER reductase family. Monomer.

The catalysed reaction is a 2,3-saturated acyl-[ACP] + NAD(+) = a (2E)-enoyl-[ACP] + NADH + H(+). Its pathway is lipid metabolism; fatty acid biosynthesis. In terms of biological role, involved in the final reduction of the elongation cycle of fatty acid synthesis (FAS II). Catalyzes the reduction of a carbon-carbon double bond in an enoyl moiety that is covalently linked to an acyl carrier protein (ACP). This chain is Enoyl-[acyl-carrier-protein] reductase [NADH], found in Idiomarina loihiensis (strain ATCC BAA-735 / DSM 15497 / L2-TR).